We begin with the raw amino-acid sequence, 565 residues long: Membrane protein insertase YidC (565 aa).

The next 6 helical transmembrane spans lie at 6 to 26 (VLLI…WGKN), 348 to 368 (LMAL…SLLH), 370 to 390 (WGWA…PLSA), 437 to 457 (GGCF…WVLV), 479 to 499 (PYFI…KLTP), and 516 to 536 (PLIF…YWVI).

This sequence belongs to the OXA1/ALB3/YidC family. Type 1 subfamily. Interacts with the Sec translocase complex via SecD. Specifically interacts with transmembrane segments of nascent integral membrane proteins during membrane integration.

The protein resides in the cell inner membrane. Its function is as follows. Required for the insertion and/or proper folding and/or complex formation of integral membrane proteins into the membrane. Involved in integration of membrane proteins that insert both dependently and independently of the Sec translocase complex, as well as at least some lipoproteins. Aids folding of multispanning membrane proteins. In Xylella fastidiosa (strain M12), this protein is Membrane protein insertase YidC.